The following is a 108-amino-acid chain: uncharacterized protein (108 aa).

Polar residues predominate over residues Met-1–Lys-10. 2 disordered regions span residues Met-1–Arg-63 and Val-83–Gln-108. The segment covering Tyr-33 to Pro-62 has biased composition (basic and acidic residues).

This is an uncharacterized protein from Gallid herpesvirus 2 (strain Chicken/Md5/ATCC VR-987) (GaHV-2).